Reading from the N-terminus, the 105-residue chain is Molt-inhibiting hormone (105 aa).

Positions 1–28 (MYRLAMRTWLAIVIVVVGTSLLFDTASA) are cleaved as a signal peptide. 3 cysteine pairs are disulfide-bonded: C35/C72, C52/C68, and C55/C81.

Belongs to the arthropod CHH/MIH/GIH/VIH hormone family. Produced by the medulla terminalis X-organ in the eyestalks and transported to the sinus gland where it is stored and released.

The protein resides in the secreted. Its function is as follows. Inhibits Y-organs where molting hormone (ecdysteroid) is secreted. A molting cycle is initiated when MIH secretion diminishes or stops. Has little or no hyperglycemic activity. This chain is Molt-inhibiting hormone, found in Penaeus japonicus (Kuruma prawn).